A 100-amino-acid polypeptide reads, in one-letter code: CCAAT/enhancer-binding protein homolog 2 (100 aa).

Disordered regions lie at residues 1 to 60 (MSGN…ETLE) and 79 to 100 (AYAK…SSAV). Residues 17–80 (EDDYSTKRKR…SFLKEMFMAY (64 aa)) enclose the bZIP domain. Positions 23–48 (KRKRNNEAVNRTRQKKRQEENDTAEK) are basic motif. A coiled-coil region spans residues 24–83 (RKRNNEAVNRTRQKKRQEENDTAEKVDELKKENETLERKVEQLQKELSFLKEMFMAYAKN). A compositionally biased stretch (basic and acidic residues) spans 39–60 (RQEENDTAEKVDELKKENETLE). Residues 52 to 73 (LKKENETLERKVEQLQKELSFL) form a leucine-zipper region. A compositionally biased stretch (pro residues) spans 88 to 100 (GPPPPPPPSSSAV).

This sequence belongs to the bZIP family. C/EBP subfamily. Interacts with transcription factor zip-11. Expressed broadly in somatic tissues including the intestine.

It localises to the nucleus. Its function is as follows. Transcription factor that binds to the promoter and the enhancer regions of target genes. Regulates expression of genes involved in fat metabolism, including ech-1.1 and fat-5. Has a protective role in response to infection by the Gram-negative bacterium P.aeruginosa. Required for the activation of infection response gene irg-1 following P.aeruginosa infection. Required to prevent P.aeruginosa ToxA-mediated lethality. May also function in concert with transcription factor zip-11 to mediate immune responses, independently of the pmk-1/p38 MAPK pathway. May act together with the bZIP transcription factor, zip-2. The sequence is that of CCAAT/enhancer-binding protein homolog 2 from Caenorhabditis elegans.